A 519-amino-acid chain; its full sequence is Pleckstrin homology domain-containing family A member 8 (519 aa).

Residues 1–93 (MEGVLYKWTN…WLVALGSAKA (93 aa)) enclose the PH domain. Position 139 is a phosphothreonine (Thr-139). Ser-145 carries the post-translational modification Phosphoserine. Phosphothreonine is present on Thr-153. The tract at residues 275–302 (GEENLESHDKDPAQPGSDSVCSPESPWE) is disordered. Positions 330–473 (IPTEAFLASC…EDFVAALTIK (144 aa)) are glycolipid transfer protein homology domain.

As to quaternary structure, homodimer. Interacts with ARF1; the interaction together with phosphatidylinositol 4-phosphate binding is required for FAPP2 GlcCer transfer ability.

It localises to the golgi apparatus. It is found in the trans-Golgi network membrane. The protein localises to the membrane. In terms of biological role, cargo transport protein that is required for apical transport from the trans-Golgi network (TGN). Transports AQP2 from the trans-Golgi network (TGN) to sites of AQP2 phosphorylation. Mediates the non-vesicular transport of glucosylceramide (GlcCer) from the trans-Golgi network (TGN) to the plasma membrane and plays a pivotal role in the synthesis of complex glycosphingolipids. Binding of both phosphatidylinositol 4-phosphate (PIP) and ARF1 are essential for the GlcCer transfer ability. Also required for primary cilium formation, possibly by being involved in the transport of raft lipids to the apical membrane, and for membrane tubulation. This Mus musculus (Mouse) protein is Pleckstrin homology domain-containing family A member 8 (Plekha8).